Reading from the N-terminus, the 100-residue chain is ESAT-6-like protein EsxB (100 aa).

Residues 80-100 form a disordered region; that stretch reads GTQYTSTDEDQAGTLASSMNI.

Belongs to the WXG100 family. CFP-10 subfamily. Forms a tight 1:1 complex with EsxA. An artificial EsxA-EsxB heterodimer interacts with EspA.

The protein resides in the secreted. Functionally, an exported protein. Plays a role in DNA conjugation, in at least a donor strain. This chain is ESAT-6-like protein EsxB, found in Mycolicibacterium smegmatis (strain ATCC 700084 / mc(2)155) (Mycobacterium smegmatis).